The primary structure comprises 339 residues: NADH-quinone oxidoreductase subunit H (339 aa).

9 consecutive transmembrane segments (helical) span residues 10–30, 50–70, 82–102, 115–135, 161–181, 187–207, 235–255, 275–295, and 311–331; these read FPLT…ILCV, PNVV…KLLF, ILFI…WAVI, VGVL…IIAG, MGLV…SGII, LPWW…ISVL, MGFA…SAMT, IPGF…FLWI, and GWKV…SVLF.

It belongs to the complex I subunit 1 family. In terms of assembly, NDH-1 is composed of 14 different subunits. Subunits NuoA, H, J, K, L, M, N constitute the membrane sector of the complex.

The protein resides in the cell inner membrane. The enzyme catalyses a quinone + NADH + 5 H(+)(in) = a quinol + NAD(+) + 4 H(+)(out). Its function is as follows. NDH-1 shuttles electrons from NADH, via FMN and iron-sulfur (Fe-S) centers, to quinones in the respiratory chain. The immediate electron acceptor for the enzyme in this species is believed to be ubiquinone. Couples the redox reaction to proton translocation (for every two electrons transferred, four hydrogen ions are translocated across the cytoplasmic membrane), and thus conserves the redox energy in a proton gradient. This subunit may bind ubiquinone. The chain is NADH-quinone oxidoreductase subunit H from Rickettsia prowazekii (strain Madrid E).